We begin with the raw amino-acid sequence, 122 residues long: Putative ankyrin repeat protein L22 (122 aa).

ANK repeat units lie at residues 3 to 32 (DNNY…DIKA), 33 to 62 (DDDY…DIRV), 63 to 92 (NNDY…NIRA), and 94 to 122 (DDYA…VLNQ).

The polypeptide is Putative ankyrin repeat protein L22 (Acanthamoeba polyphaga (Amoeba)).